The sequence spans 130 residues: Small ribosomal subunit protein uS11c (130 aa).

The protein belongs to the universal ribosomal protein uS11 family. As to quaternary structure, part of the 30S ribosomal subunit.

Its subcellular location is the plastid. It localises to the chloroplast. The sequence is that of Small ribosomal subunit protein uS11c from Marsilea quadrifolia (European water clover).